We begin with the raw amino-acid sequence, 514 residues long: 2-isopropylmalate synthase (514 aa).

Residues 5–268 (LIIFDTTLRD…DVGIDTSQIV (264 aa)) enclose the Pyruvate carboxyltransferase domain. Residues Asp14, His202, His204, and Asn239 each contribute to the Mn(2+) site. Positions 395–514 (KFVSLSQHSE…KDDKVNPQRS (120 aa)) are regulatory domain.

Belongs to the alpha-IPM synthase/homocitrate synthase family. LeuA type 1 subfamily. Homodimer. Mn(2+) serves as cofactor.

Its subcellular location is the cytoplasm. It catalyses the reaction 3-methyl-2-oxobutanoate + acetyl-CoA + H2O = (2S)-2-isopropylmalate + CoA + H(+). The protein operates within amino-acid biosynthesis; L-leucine biosynthesis; L-leucine from 3-methyl-2-oxobutanoate: step 1/4. Functionally, catalyzes the condensation of the acetyl group of acetyl-CoA with 3-methyl-2-oxobutanoate (2-ketoisovalerate) to form 3-carboxy-3-hydroxy-4-methylpentanoate (2-isopropylmalate). The polypeptide is 2-isopropylmalate synthase (Burkholderia lata (strain ATCC 17760 / DSM 23089 / LMG 22485 / NCIMB 9086 / R18194 / 383)).